Consider the following 76-residue polypeptide: Putative membrane protein insertion efficiency factor (76 aa).

It belongs to the UPF0161 family.

The protein resides in the cell inner membrane. Its function is as follows. Could be involved in insertion of integral membrane proteins into the membrane. This is Putative membrane protein insertion efficiency factor from Porphyromonas gingivalis (strain ATCC 33277 / DSM 20709 / CIP 103683 / JCM 12257 / NCTC 11834 / 2561).